The primary structure comprises 481 residues: NADH-quinone oxidoreductase subunit N (481 aa).

The next 13 helical transmembrane spans lie at 14–34, 38–57, 76–96, 108–128, 162–182, 204–224, 235–255, 272–292, 297–317, 323–343, 369–389, 403–423, and 449–469; these read LILSVGALLLLLVAAFGGDGF, IGWGAVALFAAAGFSLTGPA, FAKLLIYIAAAVSVAVAPGFF, PVLILLSGVGMGMMVSAGDLL, FVLGALASGILLYGISLLYGF, MFGMVFVFAGLAFKISAVPFH, PTPVTAFFASAPKVAGMALLL, IVVFAALASTILGAVAAIGQT, LLAYSSINNVGFALFGLAAGS, ATMTYMAVYVAMTLGSFICVL, LAAAFAIFMFSLAGIPPLFGF, GFWPLAMVGIATSVIGAFYYL, and GLITLAALAVSPLGYLAIPLL.

The protein belongs to the complex I subunit 2 family. As to quaternary structure, NDH-1 is composed of 14 different subunits. Subunits NuoA, H, J, K, L, M, N constitute the membrane sector of the complex.

Its subcellular location is the cell inner membrane. The enzyme catalyses a quinone + NADH + 5 H(+)(in) = a quinol + NAD(+) + 4 H(+)(out). Functionally, NDH-1 shuttles electrons from NADH, via FMN and iron-sulfur (Fe-S) centers, to quinones in the respiratory chain. The immediate electron acceptor for the enzyme in this species is believed to be ubiquinone. Couples the redox reaction to proton translocation (for every two electrons transferred, four hydrogen ions are translocated across the cytoplasmic membrane), and thus conserves the redox energy in a proton gradient. The protein is NADH-quinone oxidoreductase subunit N of Rhizorhabdus wittichii (strain DSM 6014 / CCUG 31198 / JCM 15750 / NBRC 105917 / EY 4224 / RW1) (Sphingomonas wittichii).